We begin with the raw amino-acid sequence, 279 residues long: Phosphate import ATP-binding protein PstB 2 (279 aa).

Residues 34–274 (FDIENLDLYY…PSDDRTRGYV (241 aa)) form the ABC transporter domain. 66–73 (GPSGCGKS) serves as a coordination point for ATP.

The protein belongs to the ABC transporter superfamily. Phosphate importer (TC 3.A.1.7) family. As to quaternary structure, the complex is composed of two ATP-binding proteins (PstB), two transmembrane proteins (PstC and PstA) and a solute-binding protein (PstS).

It is found in the cell inner membrane. It catalyses the reaction phosphate(out) + ATP + H2O = ADP + 2 phosphate(in) + H(+). Its function is as follows. Part of the ABC transporter complex PstSACB involved in phosphate import. Responsible for energy coupling to the transport system. The sequence is that of Phosphate import ATP-binding protein PstB 2 from Vibrio vulnificus (strain YJ016).